The primary structure comprises 469 residues: UDP-N-acetylmuramate--L-alanine ligase (469 aa).

118 to 124 (GTHGKTT) is an ATP binding site.

It belongs to the MurCDEF family.

It is found in the cytoplasm. It carries out the reaction UDP-N-acetyl-alpha-D-muramate + L-alanine + ATP = UDP-N-acetyl-alpha-D-muramoyl-L-alanine + ADP + phosphate + H(+). The protein operates within cell wall biogenesis; peptidoglycan biosynthesis. Cell wall formation. The chain is UDP-N-acetylmuramate--L-alanine ligase from Ruegeria sp. (strain TM1040) (Silicibacter sp.).